A 727-amino-acid chain; its full sequence is Cadmium-transporting ATPase (727 aa).

Residues 12–75 enclose the HMA domain; that stretch reads EMNVYRVQGF…AGAFENLKVS (64 aa). Cd(2+) contacts are provided by Cys-23 and Cys-26. 5 consecutive transmembrane segments (helical) span residues 106–126, 130–150, 171–191, 336–356, and 364–384; these read STLLFATLLIAFGYLSHFVNG, LVTSMLFVGSIVIGGYSLFKV, IGATIIGKWAEASIVVILFAI, IIMVIAALVAVVPPLFFGGSW, and LAVLVVGCPCALVISTPISIV. Catalysis depends on Asp-415, which acts as the 4-aspartylphosphate intermediate. A run of 2 helical transmembrane segments spans residues 672 to 694 and 699 to 721; these read LNIIKANITFAIGIKIIALLLVI and TLWIAILSDMGATILVALNSLRL.

It belongs to the cation transport ATPase (P-type) (TC 3.A.3) family. Type IB subfamily.

It localises to the cell membrane. It carries out the reaction Cd(2+)(in) + ATP + H2O = Cd(2+)(out) + ADP + phosphate + H(+). Its activity is regulated as follows. Inhibited by the antibiotic bafilomycin A1. Partially inhibited by DCCD, nigericin and FCCP. Couples the hydrolysis of ATP with the export of cadmium. Involved in cadmium resistance. This is Cadmium-transporting ATPase from Staphylococcus aureus.